A 156-amino-acid chain; its full sequence is ATP synthase subunit b', chloroplastic (156 aa).

The chain crosses the membrane as a helical span at residues 20–42 (NGTLPLMALQFLTLMVLLNTIFY).

Belongs to the ATPase B chain family. F-type ATPases have 2 components, F(1) - the catalytic core - and F(0) - the membrane proton channel. F(1) has five subunits: alpha(3), beta(3), gamma(1), delta(1), epsilon(1). F(0) has four main subunits: a(1), b(1), b'(1) and c(10-14). The alpha and beta chains form an alternating ring which encloses part of the gamma chain. F(1) is attached to F(0) by a central stalk formed by the gamma and epsilon chains, while a peripheral stalk is formed by the delta, b and b' chains.

The protein localises to the plastid. Its subcellular location is the chloroplast thylakoid membrane. Functionally, f(1)F(0) ATP synthase produces ATP from ADP in the presence of a proton or sodium gradient. F-type ATPases consist of two structural domains, F(1) containing the extramembraneous catalytic core and F(0) containing the membrane proton channel, linked together by a central stalk and a peripheral stalk. During catalysis, ATP synthesis in the catalytic domain of F(1) is coupled via a rotary mechanism of the central stalk subunits to proton translocation. Component of the F(0) channel, it forms part of the peripheral stalk, linking F(1) to F(0). The b'-subunit is a diverged and duplicated form of b found in plants and photosynthetic bacteria. The polypeptide is ATP synthase subunit b', chloroplastic (Pyropia yezoensis (Susabi-nori)).